The primary structure comprises 147 residues: Hemoglobin subunit gamma (147 aa).

The Globin domain maps to 3 to 147 (HFTVEEKAVI…VAIALAHKYH (145 aa)). Positions 64 and 93 each coordinate heme b.

The protein belongs to the globin family. In terms of assembly, heterotetramer of two alpha chains and two gamma chains in fetal hemoglobin (Hb F). In terms of tissue distribution, red blood cells.

Gamma chains make up the fetal hemoglobin F, in combination with alpha chains. This is Hemoglobin subunit gamma (HBG) from Cheirogaleus medius (Fat-tailed dwarf lemur).